The primary structure comprises 394 residues: Protein STRICTOSIDINE SYNTHASE-LIKE 1 (394 aa).

The N-terminal stretch at 1-21 (MESLLLIAYAFLYLFLLSHEA) is a signal peptide. Positions 61–73 (GLEKRPNHSEDNP) are enriched in basic and acidic residues. Positions 61-92 (GLEKRPNHSEDNPPSRGWTGEPGLDPRGEGPY) are disordered. N-linked (GlcNAc...) asparagine glycans are attached at residues asparagine 67, asparagine 122, and asparagine 196.

The protein belongs to the strictosidine synthase family.

It is found in the vacuole. The chain is Protein STRICTOSIDINE SYNTHASE-LIKE 1 from Arabidopsis thaliana (Mouse-ear cress).